Reading from the N-terminus, the 372-residue chain is N-methyl-L-tryptophan oxidase (372 aa).

4–34 (DLIIIGSGSVGAAAGYYATRAGLKVLMTDAH) serves as a coordination point for FAD. S-8alpha-FAD cysteine is present on cysteine 307.

Belongs to the MSOX/MTOX family. MTOX subfamily. In terms of assembly, monomer. FAD serves as cofactor.

It carries out the reaction N(alpha)-methyl-L-tryptophan + O2 + H2O = L-tryptophan + formaldehyde + H2O2. Its function is as follows. Catalyzes the oxidative demethylation of N-methyl-L-tryptophan. This chain is N-methyl-L-tryptophan oxidase, found in Salmonella dublin (strain CT_02021853).